A 298-amino-acid chain; its full sequence is Protease HtpX homolog (298 aa).

2 consecutive transmembrane segments (helical) span residues 15–35 (YVMI…GYVF) and 39–59 (AMAG…MMIA). H143 is a binding site for Zn(2+). E144 is a catalytic residue. H147 lines the Zn(2+) pocket. A run of 2 helical transmembrane segments spans residues 158 to 178 (IALA…RSFW) and 197 to 217 (IVMM…TTIA). E226 contributes to the Zn(2+) binding site.

The protein belongs to the peptidase M48B family. Requires Zn(2+) as cofactor.

Its subcellular location is the cell membrane. This Pediococcus pentosaceus (strain ATCC 25745 / CCUG 21536 / LMG 10740 / 183-1w) protein is Protease HtpX homolog.